Here is a 54-residue protein sequence, read N- to C-terminus: UPF0391 membrane protein Rfer_1875 (54 aa).

The next 2 helical transmembrane spans lie at Ala-5–Ala-25 and Ile-30–Leu-50.

It belongs to the UPF0391 family.

The protein resides in the cell membrane. This Albidiferax ferrireducens (strain ATCC BAA-621 / DSM 15236 / T118) (Rhodoferax ferrireducens) protein is UPF0391 membrane protein Rfer_1875.